The following is a 546-amino-acid chain: Chaperonin GroEL (546 aa).

ATP contacts are provided by residues 30 to 33 (TLGP), Lys-51, 87 to 91 (DGTTT), Gly-415, and Asp-497. The tract at residues 527-546 (PKKDSPAPAMPGGGMGGMDF) is disordered. Gly residues predominate over residues 537–546 (PGGGMGGMDF).

The protein belongs to the chaperonin (HSP60) family. As to quaternary structure, forms a cylinder of 14 subunits composed of two heptameric rings stacked back-to-back. Interacts with the co-chaperonin GroES.

Its subcellular location is the cytoplasm. The catalysed reaction is ATP + H2O + a folded polypeptide = ADP + phosphate + an unfolded polypeptide.. In terms of biological role, together with its co-chaperonin GroES, plays an essential role in assisting protein folding. The GroEL-GroES system forms a nano-cage that allows encapsulation of the non-native substrate proteins and provides a physical environment optimized to promote and accelerate protein folding. This is Chaperonin GroEL from Methylorubrum populi (strain ATCC BAA-705 / NCIMB 13946 / BJ001) (Methylobacterium populi).